The following is a 335-amino-acid chain: tRNA N6-adenosine threonylcarbamoyltransferase (335 aa).

Fe cation-binding residues include His-111 and His-115. Residues 133–137 (LISGG), Asp-166, Gly-179, and Asn-276 each bind substrate. Asp-301 is a Fe cation binding site.

The protein belongs to the KAE1 / TsaD family. Fe(2+) serves as cofactor.

It is found in the cytoplasm. It carries out the reaction L-threonylcarbamoyladenylate + adenosine(37) in tRNA = N(6)-L-threonylcarbamoyladenosine(37) in tRNA + AMP + H(+). Required for the formation of a threonylcarbamoyl group on adenosine at position 37 (t(6)A37) in tRNAs that read codons beginning with adenine. Is involved in the transfer of the threonylcarbamoyl moiety of threonylcarbamoyl-AMP (TC-AMP) to the N6 group of A37, together with TsaE and TsaB. TsaD likely plays a direct catalytic role in this reaction. The chain is tRNA N6-adenosine threonylcarbamoyltransferase from Wolbachia sp. subsp. Brugia malayi (strain TRS).